A 544-amino-acid polypeptide reads, in one-letter code: O-phosphoserine--tRNA(Cys) ligase (544 aa).

Substrate contacts are provided by residues 194 to 196 (HMT), 239 to 241 (SAS), 281 to 282 (YY), and Asn335.

It belongs to the class-II aminoacyl-tRNA synthetase family. O-phosphoseryl-tRNA(Cys) synthetase subfamily. As to quaternary structure, homotetramer. Interacts with SepCysS.

It carries out the reaction tRNA(Cys) + O-phospho-L-serine + ATP = O-phospho-L-seryl-tRNA(Cys) + AMP + diphosphate. Functionally, catalyzes the attachment of O-phosphoserine (Sep) to tRNA(Cys). This chain is O-phosphoserine--tRNA(Cys) ligase, found in Methanopyrus kandleri (strain AV19 / DSM 6324 / JCM 9639 / NBRC 100938).